The following is a 342-amino-acid chain: Phosphate acyltransferase (342 aa).

This sequence belongs to the PlsX family. As to quaternary structure, homodimer. Probably interacts with PlsY.

It localises to the cytoplasm. The enzyme catalyses a fatty acyl-[ACP] + phosphate = an acyl phosphate + holo-[ACP]. It functions in the pathway lipid metabolism; phospholipid metabolism. In terms of biological role, catalyzes the reversible formation of acyl-phosphate (acyl-PO(4)) from acyl-[acyl-carrier-protein] (acyl-ACP). This enzyme utilizes acyl-ACP as fatty acyl donor, but not acyl-CoA. In Legionella pneumophila (strain Paris), this protein is Phosphate acyltransferase.